Consider the following 394-residue polypeptide: Argininosuccinate synthase (394 aa).

ATP contacts are provided by residues 7–15 (AYSGGLDTS) and Ala34. 2 residues coordinate L-citrulline: Tyr85 and Ser90. Gly115 lines the ATP pocket. Residues Thr117, Asn121, and Asp122 each contribute to the L-aspartate site. An L-citrulline-binding site is contributed by Asn121. Residues Arg125, Ser176, Ser185, Glu261, and Tyr273 each contribute to the L-citrulline site.

It belongs to the argininosuccinate synthase family. Type 1 subfamily. In terms of assembly, homotetramer.

It is found in the cytoplasm. The enzyme catalyses L-citrulline + L-aspartate + ATP = 2-(N(omega)-L-arginino)succinate + AMP + diphosphate + H(+). Its pathway is amino-acid biosynthesis; L-arginine biosynthesis; L-arginine from L-ornithine and carbamoyl phosphate: step 2/3. The protein is Argininosuccinate synthase of Ehrlichia ruminantium (strain Gardel).